The sequence spans 108 residues: uncharacterized protein (108 aa).

A helical transmembrane segment spans residues 15-37; that stretch reads SYYFYIFWNFFLPMFIVYRGFGL.

It is found in the membrane. This is an uncharacterized protein from Archaeoglobus fulgidus (strain ATCC 49558 / DSM 4304 / JCM 9628 / NBRC 100126 / VC-16).